The chain runs to 234 residues: MTKISKRMASLSSKIEDRAYPPLEAINLVKESSTAKFDETIEAHVRLGIDPKYTDQQIRTTVTLPNGTGQTIRIAVIARGEKVAEAKSAGADLAGEEELVDSISKGEMGFDLLIATPDMMPKVAKLGRVLGPRGLMPNPKTGTVTADLVGAIKEFKAGKLEFRADKAGIIHVRFGKASFNADALLENLKTLQETIDRNKPSGAKGRFWKTLYITSTMGPSIEVDIAALQDISQE.

This sequence belongs to the universal ribosomal protein uL1 family. As to quaternary structure, part of the 50S ribosomal subunit.

In terms of biological role, binds directly to 23S rRNA. The L1 stalk is quite mobile in the ribosome, and is involved in E site tRNA release. Its function is as follows. Protein L1 is also a translational repressor protein, it controls the translation of the L11 operon by binding to its mRNA. This chain is Large ribosomal subunit protein uL1, found in Prochlorococcus marinus (strain MIT 9211).